The primary structure comprises 85 residues: Small ribosomal subunit protein bS18 (85 aa).

The span at 1–12 (MAFAQAGGGGGQ) shows a compositional bias: gly residues. Residues 1-22 (MAFAQAGGGGGQRRPFFRRRKT) form a disordered region.

It belongs to the bacterial ribosomal protein bS18 family. Part of the 30S ribosomal subunit. Forms a tight heterodimer with protein bS6.

Its function is as follows. Binds as a heterodimer with protein bS6 to the central domain of the 16S rRNA, where it helps stabilize the platform of the 30S subunit. In Azorhizobium caulinodans (strain ATCC 43989 / DSM 5975 / JCM 20966 / LMG 6465 / NBRC 14845 / NCIMB 13405 / ORS 571), this protein is Small ribosomal subunit protein bS18.